Reading from the N-terminus, the 408-residue chain is NADH-quinone oxidoreductase subunit D (408 aa).

It belongs to the complex I 49 kDa subunit family. As to quaternary structure, NDH-1 is composed of 14 different subunits. Subunits NuoB, C, D, E, F, and G constitute the peripheral sector of the complex.

The protein resides in the cell inner membrane. The catalysed reaction is a quinone + NADH + 5 H(+)(in) = a quinol + NAD(+) + 4 H(+)(out). Its function is as follows. NDH-1 shuttles electrons from NADH, via FMN and iron-sulfur (Fe-S) centers, to quinones in the respiratory chain. The immediate electron acceptor for the enzyme in this species is believed to be ubiquinone. Couples the redox reaction to proton translocation (for every two electrons transferred, four hydrogen ions are translocated across the cytoplasmic membrane), and thus conserves the redox energy in a proton gradient. This chain is NADH-quinone oxidoreductase subunit D, found in Wolinella succinogenes (strain ATCC 29543 / DSM 1740 / CCUG 13145 / JCM 31913 / LMG 7466 / NCTC 11488 / FDC 602W) (Vibrio succinogenes).